The following is a 635-amino-acid chain: Very-long-chain aldehyde decarbonylase GL1-6 (635 aa).

A run of 4 helical transmembrane segments spans residues 46 to 66 (LLNFMVFPMLLLRLLYGQLWI), 100 to 120 (IILTALVFYLVSATMPQAQVA), 127 to 147 (GMVVTAVLHAGPVEFLYYWLH), and 183 to 203 (VVYFVLLAIPILSTVATGTVS). Positions 139 to 273 (VEFLYYWLHR…MPVYDYIYGT (135 aa)) constitute a Fatty acid hydroxylase domain.

The protein belongs to the sterol desaturase family. Homodimer. In terms of tissue distribution, expressed in germinating seeds and shoots.

Its subcellular location is the endoplasmic reticulum membrane. It catalyses the reaction a long-chain fatty aldehyde + 2 NADPH + O2 + H(+) = a long-chain alkane + formate + 2 NADP(+) + H2O. Its function is as follows. Aldehyde decarbonylase involved in the conversion of aldehydes to alkanes. Core component of a very-long-chain alkane synthesis complex. The polypeptide is Very-long-chain aldehyde decarbonylase GL1-6 (Oryza sativa subsp. japonica (Rice)).